Here is a 233-residue protein sequence, read N- to C-terminus: Large ribosomal subunit protein uL1 (233 aa).

This sequence belongs to the universal ribosomal protein uL1 family. In terms of assembly, part of the 50S ribosomal subunit.

Binds directly to 23S rRNA. The L1 stalk is quite mobile in the ribosome, and is involved in E site tRNA release. In terms of biological role, protein L1 is also a translational repressor protein, it controls the translation of the L11 operon by binding to its mRNA. The sequence is that of Large ribosomal subunit protein uL1 from Rhodospirillum rubrum (strain ATCC 11170 / ATH 1.1.1 / DSM 467 / LMG 4362 / NCIMB 8255 / S1).